A 473-amino-acid chain; its full sequence is Spliceosome-associated protein CWC27 homolog (473 aa).

S2 is modified (N-acetylserine). Positions 11 to 166 (TNGKVLLKTT…NPHKIKSCEV (156 aa)) constitute a PPIase cyclophilin-type domain. The segment covering 177–193 (REIKRPKKEKPEEEVKK) has biased composition (basic and acidic residues). 2 disordered regions span residues 177–386 (REIK…EDQT) and 399–473 (QAIA…KERR). Residues 206–230 (SFGEEAEEEEEEVNRVSQSMKGKSK) adopt a coiled-coil conformation. A compositionally biased stretch (basic and acidic residues) spans 231–241 (SSHDLLKDDPH). Residues 257–266 (GDLDDGGEGE) show a composition bias toward acidic residues. Basic and acidic residues-rich tracts occupy residues 267 to 287 (SAEHDEYIDGDEKNLMRERIA), 305 to 348 (EVEK…KRSE), and 360 to 372 (EYRREKQKYEALR). Positions 305–378 (EVEKKSVNRS…EALRKQQSKK (74 aa)) form a coiled coil. At S347 the chain carries Phosphoserine. Positions 405-419 (PENDIPETEVEDDEG) are enriched in acidic residues. 2 stretches are compositionally biased toward basic and acidic residues: residues 426–438 (QFEDKSRKVKDAS) and 458–473 (RREESKKLMREKKERR).

This sequence belongs to the cyclophilin-type PPIase family. Part of the activated spliceosome B/catalytic step 1 spliceosome, one of the forms of the spliceosome which has a well-formed active site but still cannot catalyze the branching reaction and is composed at least of 52 proteins, the U2, U5 and U6 snRNAs and the pre-mRNA. Recruited during early steps of activated spliceosome B maturation, it is probably one of the first proteins released from this complex as he matures to the spliceosome C complex. Component of the minor spliceosome, which splices U12-type introns.

Its subcellular location is the nucleus. In terms of biological role, as part of the spliceosome, plays a role in pre-mRNA splicing. Probable inactive PPIase with no peptidyl-prolyl cis-trans isomerase activity. As a component of the minor spliceosome, involved in the splicing of U12-type introns in pre-mRNAs. This is Spliceosome-associated protein CWC27 homolog from Pongo abelii (Sumatran orangutan).